Consider the following 179-residue polypeptide: Large ribosomal subunit protein uL5 (179 aa).

The protein belongs to the universal ribosomal protein uL5 family. As to quaternary structure, part of the 50S ribosomal subunit; part of the 5S rRNA/L5/L18/L25 subcomplex. Contacts the 5S rRNA and the P site tRNA. Forms a bridge to the 30S subunit in the 70S ribosome.

Its function is as follows. This is one of the proteins that bind and probably mediate the attachment of the 5S RNA into the large ribosomal subunit, where it forms part of the central protuberance. In the 70S ribosome it contacts protein S13 of the 30S subunit (bridge B1b), connecting the 2 subunits; this bridge is implicated in subunit movement. Contacts the P site tRNA; the 5S rRNA and some of its associated proteins might help stabilize positioning of ribosome-bound tRNAs. This Prochlorococcus marinus (strain MIT 9215) protein is Large ribosomal subunit protein uL5.